The primary structure comprises 364 residues: Alanine racemase (364 aa).

The Proton acceptor; specific for D-alanine role is filled by K34. An N6-(pyridoxal phosphate)lysine modification is found at K34. R129 provides a ligand contact to substrate. The active-site Proton acceptor; specific for L-alanine is Y259. M307 contacts substrate.

Belongs to the alanine racemase family. Pyridoxal 5'-phosphate serves as cofactor.

It catalyses the reaction L-alanine = D-alanine. It functions in the pathway amino-acid biosynthesis; D-alanine biosynthesis; D-alanine from L-alanine: step 1/1. Catalyzes the interconversion of L-alanine and D-alanine. May also act on other amino acids. In Coxiella burnetii (strain RSA 493 / Nine Mile phase I), this protein is Alanine racemase (alr).